We begin with the raw amino-acid sequence, 54 residues long: Large ribosomal subunit protein bL33 (54 aa).

It belongs to the bacterial ribosomal protein bL33 family.

The polypeptide is Large ribosomal subunit protein bL33 (Corynebacterium urealyticum (strain ATCC 43042 / DSM 7109)).